The sequence spans 195 residues: Dephospho-CoA kinase (195 aa).

Residues 4–195 (IIGLTGGIAS…EQILDALQRL (192 aa)) form the DPCK domain. 12–17 (ASGKST) lines the ATP pocket.

This sequence belongs to the CoaE family.

The protein localises to the cytoplasm. The enzyme catalyses 3'-dephospho-CoA + ATP = ADP + CoA + H(+). The protein operates within cofactor biosynthesis; coenzyme A biosynthesis; CoA from (R)-pantothenate: step 5/5. Its function is as follows. Catalyzes the phosphorylation of the 3'-hydroxyl group of dephosphocoenzyme A to form coenzyme A. The protein is Dephospho-CoA kinase of Streptococcus agalactiae serotype III (strain NEM316).